Reading from the N-terminus, the 146-residue chain is SsrA-binding protein (146 aa).

The segment covering 127–139 (KRQTIKDRDNSRE) has biased composition (basic and acidic residues). The segment at 127 to 146 (KRQTIKDRDNSREARKHIRV) is disordered.

This sequence belongs to the SmpB family.

The protein localises to the cytoplasm. In terms of biological role, required for rescue of stalled ribosomes mediated by trans-translation. Binds to transfer-messenger RNA (tmRNA), required for stable association of tmRNA with ribosomes. tmRNA and SmpB together mimic tRNA shape, replacing the anticodon stem-loop with SmpB. tmRNA is encoded by the ssrA gene; the 2 termini fold to resemble tRNA(Ala) and it encodes a 'tag peptide', a short internal open reading frame. During trans-translation Ala-aminoacylated tmRNA acts like a tRNA, entering the A-site of stalled ribosomes, displacing the stalled mRNA. The ribosome then switches to translate the ORF on the tmRNA; the nascent peptide is terminated with the 'tag peptide' encoded by the tmRNA and targeted for degradation. The ribosome is freed to recommence translation, which seems to be the essential function of trans-translation. This Malacoplasma penetrans (strain HF-2) (Mycoplasma penetrans) protein is SsrA-binding protein.